The following is a 78-amino-acid chain: Beta-defensin 29 (78 aa).

Residues 1–23 (MPVTKSYFMTVVVVLILVDETTG) form the signal peptide. 3 disulfides stabilise this stretch: cysteine 40/cysteine 67, cysteine 47/cysteine 61, and cysteine 51/cysteine 68.

It belongs to the beta-defensin family. Highly expressed in the cauda epididymis.

The protein localises to the secreted. Has antibacterial activity. This chain is Beta-defensin 29 (Defb29), found in Mus musculus (Mouse).